Consider the following 421-residue polypeptide: D-amino acid dehydrogenase (421 aa).

Residue 3 to 17 (VIVLGSGVIGVASAY) participates in FAD binding.

This sequence belongs to the DadA oxidoreductase family. It depends on FAD as a cofactor.

It catalyses the reaction a D-alpha-amino acid + A + H2O = a 2-oxocarboxylate + AH2 + NH4(+). It functions in the pathway amino-acid degradation; D-alanine degradation; NH(3) and pyruvate from D-alanine: step 1/1. Oxidative deamination of D-amino acids. The polypeptide is D-amino acid dehydrogenase (Acinetobacter baumannii (strain ATCC 17978 / DSM 105126 / CIP 53.77 / LMG 1025 / NCDC KC755 / 5377)).